Here is a 202-residue protein sequence, read N- to C-terminus: Imidazoleglycerol-phosphate dehydratase (202 aa).

This sequence belongs to the imidazoleglycerol-phosphate dehydratase family.

The protein localises to the cytoplasm. It carries out the reaction D-erythro-1-(imidazol-4-yl)glycerol 3-phosphate = 3-(imidazol-4-yl)-2-oxopropyl phosphate + H2O. It functions in the pathway amino-acid biosynthesis; L-histidine biosynthesis; L-histidine from 5-phospho-alpha-D-ribose 1-diphosphate: step 6/9. The chain is Imidazoleglycerol-phosphate dehydratase from Parasynechococcus marenigrum (strain WH8102).